A 1953-amino-acid polypeptide reads, in one-letter code: Putative surface-exposed virulence protein BigA (1953 aa).

A signal peptide spans 1–27 (MNPMQKKKLISIAIALTLQSYYIPAIA). Disordered regions lie at residues 31–50 (NDDEKECPSNISSLPKEKRA), 88–258 (GGGD…TFSN), and 1496–1517 (TTAPTEGSIPTPPADPNAPQQL). The stretch at 101–103 (PDN) is one 1; truncated repeat. Positions 101 to 252 (PDNGGDVTPP…DDDDTPPDDS (152 aa)) are 15 X 11 AA tandem repeats. A 2; truncated repeat occupies 104–113 (GGDVTPPDDG). One copy of the 3; truncated repeat lies at 114–122 (GNVTPPDDG). A run of 11 repeats spans residues 123-133 (GNVTPPDDGGD), 134-144 (DNVTPPDDSGD), 145-155 (DDVAPPDDSGD), 156-166 (DDVTPPDDSGD), 167-177 (DDVTPPDDSGD), 178-188 (GDVTPPDDSGD), 189-199 (DDVTPPDDSGD), 200-210 (DDVTPPDDSGD), 211-221 (DDVTPPDDSGD), 222-232 (DDVTPPDDSGD), and 233-243 (DDVTPPDDSGD). 2 stretches are compositionally biased toward acidic residues: residues 141 to 177 (DSGDDDVAPPDDSGDDDVTPPDDSGDDDVTPPDDSGD) and 185 to 249 (DSGD…DTPP). A 15; truncated repeat occupies 244–252 (DDDTPPDDS). The region spanning 1649–1952 (SGAQATTVFR…GFMLNVKKTF (304 aa)) is the Autotransporter domain.

The sequence is that of Putative surface-exposed virulence protein BigA (bigA) from Salmonella typhimurium (strain LT2 / SGSC1412 / ATCC 700720).